A 404-amino-acid polypeptide reads, in one-letter code: Cytochrome P450 monooxygenase avaI (404 aa).

Heme is bound at residue Cys-382.

It belongs to the cytochrome P450 family. The cofactor is heme.

Its pathway is secondary metabolite biosynthesis. In terms of biological role, cytochrome P450 monooxygenase; part of the cluster that mediates the biosynthesis of a highly modified cyclo-arginine-tryptophan dipeptide (cRW). The first step of the pathway is perfornmed by the arginine-containing cyclodipeptide synthase (RCPDS) avaA that acts as the scaffold-generating enzyme and is responsible for formation of the cyclo-Arg-Trp (cRW) diketopiperazine. AvaB then acts as a multifunctional flavoenzyme that is responsible for generating the cyclo-Arg-formylkynurenine DKP, which can be deformylated by avaC. AvaB then further catalyzes an additional N-oxidation followed by cyclization and dehydration. The next step is an N-acetylation of the guanidine group catalyzed by the arginine N-acetyltransferase avaD. The roles of the additional enzymes identified within the ava cluster still have to be determined. The sequence is that of Cytochrome P450 monooxygenase avaI from Aspergillus versicolor.